Consider the following 460-residue polypeptide: Dihydroorotate dehydrogenase (quinone), mitochondrial (460 aa).

The N-terminal 32 residues, 1–32, are a transit peptide targeting the mitochondrion; the sequence is MAGRAATSSAKWAREFLFRRVSSNPLGATRNC. Residues 53–69 traverse the membrane as a helical segment; that stretch reads ILTGATIGLAIAGGAYV. FMN contacts are provided by residues 141-145 and Ser165; that span reads AGFDK. A substrate-binding site is contributed by Lys145. 190 to 194 lines the substrate pocket; it reads NRCGF. The segment at 213 to 245 is disordered; sequence RMLAETSATSSSPSDDVKPGGKSGPGILGVNLG. Asn243 and Asn274 together coordinate FMN. 274–279 provides a ligand contact to substrate; that stretch reads NVSSPN. Catalysis depends on Ser277, which acts as the Nucleophile. Positions 319 and 347 each coordinate FMN. 348 to 349 contacts substrate; that stretch reads NT. Residues Gly371, Gly400, and 421-422 contribute to the FMN site; that span reads YT.

Belongs to the dihydroorotate dehydrogenase family. Type 2 subfamily. It depends on FMN as a cofactor.

The protein resides in the mitochondrion inner membrane. It carries out the reaction (S)-dihydroorotate + a quinone = orotate + a quinol. The protein operates within pyrimidine metabolism; UMP biosynthesis via de novo pathway; orotate from (S)-dihydroorotate (quinone route): step 1/1. Its function is as follows. Catalyzes the conversion of dihydroorotate to orotate with quinone as electron acceptor. The chain is Dihydroorotate dehydrogenase (quinone), mitochondrial (PYRD) from Arabidopsis thaliana (Mouse-ear cress).